Reading from the N-terminus, the 504-residue chain is Ribosomal protein uS12 methylthiotransferase RimO (504 aa).

In terms of domain architecture, MTTase N-terminal spans 19–135 (KKVGFVSLGC…ILAASGIEPR (117 aa)). Residues Cys-28, Cys-64, Cys-98, Cys-214, Cys-218, and Cys-221 each contribute to the [4Fe-4S] cluster site. The Radical SAM core domain occupies 200–430 (ATPKYMAYIK…MSLQKQISKK (231 aa)). The TRAM domain occupies 433–504 (KALIGREFDV…HDYDLVARLL (72 aa)).

Belongs to the methylthiotransferase family. RimO subfamily. [4Fe-4S] cluster serves as cofactor.

Its subcellular location is the cytoplasm. It carries out the reaction L-aspartate(89)-[ribosomal protein uS12]-hydrogen + (sulfur carrier)-SH + AH2 + 2 S-adenosyl-L-methionine = 3-methylsulfanyl-L-aspartate(89)-[ribosomal protein uS12]-hydrogen + (sulfur carrier)-H + 5'-deoxyadenosine + L-methionine + A + S-adenosyl-L-homocysteine + 2 H(+). In terms of biological role, catalyzes the methylthiolation of an aspartic acid residue of ribosomal protein uS12. This chain is Ribosomal protein uS12 methylthiotransferase RimO, found in Koribacter versatilis (strain Ellin345).